The sequence spans 731 residues: Auxin response factor 3 (731 aa).

Low complexity predominate over residues 1-22; the sequence is MASSASSSSSPSSRPPLMALPS. The interval 1-41 is disordered; that stretch reads MASSASSSSSPSSRPPLMALPSFYRPPWPSERGGEQRATDC. Residues 191–293 constitute a DNA-binding region (TF-B3); it reads FCKTLTASDT…ELRLGVRRAT (103 aa).

This sequence belongs to the ARF family. Homo and heterodimers. In terms of tissue distribution, expressed in roots, culms, leaves and young panicles.

The protein localises to the nucleus. In terms of biological role, auxin response factors (ARFs) are transcriptional factors that bind specifically to the DNA sequence 5'-TGTCTC-3' found in the auxin-responsive promoter elements (AuxREs). The protein is Auxin response factor 3 (ARF3) of Oryza sativa subsp. japonica (Rice).